The sequence spans 268 residues: uncharacterized protein (268 aa).

The signal sequence occupies residues 1–18; it reads MRGFLLLSLGVFSFSALA. Domain regions lie at residues 24-184 and 185-268; these read SHDL…ELLP and SPAT…NWLR. A disulfide bridge links Cys-110 with Cys-115.

As to quaternary structure, monomer.

Its subcellular location is the periplasm. This is an uncharacterized protein from Pseudomonas aeruginosa (strain ATCC 15692 / DSM 22644 / CIP 104116 / JCM 14847 / LMG 12228 / 1C / PRS 101 / PAO1).